Consider the following 119-residue polypeptide: Large ribosomal subunit protein bL20 (119 aa).

It belongs to the bacterial ribosomal protein bL20 family.

Its function is as follows. Binds directly to 23S ribosomal RNA and is necessary for the in vitro assembly process of the 50S ribosomal subunit. It is not involved in the protein synthesizing functions of that subunit. The sequence is that of Large ribosomal subunit protein bL20 from Shewanella amazonensis (strain ATCC BAA-1098 / SB2B).